An 82-amino-acid polypeptide reads, in one-letter code: Small ribosomal subunit protein eS21z (82 aa).

N-acetylmethionine is present on Met-1.

Belongs to the eukaryotic ribosomal protein eS21 family.

The polypeptide is Small ribosomal subunit protein eS21z (RPS21B) (Arabidopsis thaliana (Mouse-ear cress)).